Here is a 58-residue protein sequence, read N- to C-terminus: Small integral membrane protein 11 (58 aa).

Residues 9-29 (FPLLLYILAAKTLILCLAFAG) form a helical membrane-spanning segment. Residues 29–58 (GVKVYQRKRLEAKQQKVEAEKRKQAEKKES) are a coiled coil.

Its subcellular location is the membrane. The protein is Small integral membrane protein 11 (SMIM11) of Bos taurus (Bovine).